Reading from the N-terminus, the 90-residue chain is DNA-directed RNA polymerase subunit omega (90 aa).

This sequence belongs to the RNA polymerase subunit omega family. The RNAP catalytic core consists of 2 alpha, 1 beta, 1 beta' and 1 omega subunit. When a sigma factor is associated with the core the holoenzyme is formed, which can initiate transcription.

It carries out the reaction RNA(n) + a ribonucleoside 5'-triphosphate = RNA(n+1) + diphosphate. Its function is as follows. Promotes RNA polymerase assembly. Latches the N- and C-terminal regions of the beta' subunit thereby facilitating its interaction with the beta and alpha subunits. This chain is DNA-directed RNA polymerase subunit omega, found in Hamiltonella defensa subsp. Acyrthosiphon pisum (strain 5AT).